Reading from the N-terminus, the 99-residue chain is MEVVDPKIDPWNHPGSQPETPCNNCYCKKCCFHCPLCFMKKGLGISYGRKKRRQRRRTPQGSKIHQDPVPKQPLSQTRGDPTGPEESKKKVESQTETDP.

Positions 1 to 24 are interaction with human CREBBP; it reads MEVVDPKIDPWNHPGSQPETPCNN. The transactivation stretch occupies residues 1-48; sequence MEVVDPKIDPWNHPGSQPETPCNNCYCKKCCFHCPLCFMKKGLGISYG. 3 residues coordinate Zn(2+): cysteine 22, cysteine 25, and cysteine 27. The tract at residues 22–37 is cysteine-rich; that stretch reads CNNCYCKKCCFHCPLC. N6-acetyllysine; by host PCAF is present on lysine 28. Residues cysteine 30, histidine 33, cysteine 34, and cysteine 37 each coordinate Zn(2+). Positions 38 to 48 are core; sequence FMKKGLGISYG. A disordered region spans residues 47 to 99; the sequence is YGRKKRRQRRRTPQGSKIHQDPVPKQPLSQTRGDPTGPEESKKKVESQTETDP. Basic residues predominate over residues 48–58; the sequence is GRKKRRQRRRT. A Nuclear localization signal, RNA-binding (TAR), and protein transduction motif is present at residues 49–57; that stretch reads RKKRRQRRR. Positions 49 to 86 are interaction with the host capping enzyme RNGTT; it reads RKKRRQRRRTPQGSKIHQDPVPKQPLSQTRGDPTGPEE. Residues lysine 50 and lysine 51 each carry the N6-acetyllysine; by host EP300 and GCN5L2 modification. Asymmetric dimethylarginine; by host PRMT6 occurs at positions 52 and 53. Lysine 71 is covalently cross-linked (Glycyl lysine isopeptide (Lys-Gly) (interchain with G-Cter in ubiquitin)). Positions 78-80 match the Cell attachment site motif; it reads RGD.

This sequence belongs to the lentiviruses Tat family. Interacts with host CCNT1. Associates with the P-TEFb complex composed at least of Tat, P-TEFb (CDK9 and CCNT1), TAR RNA, RNA Pol II. Recruits the HATs CREBBP, TAF1/TFIID, EP300, PCAF and GCN5L2. Interacts with host KAT5/Tip60; this interaction targets the latter to degradation. Interacts with the host deacetylase SIRT1. Interacts with host capping enzyme RNGTT; this interaction stimulates RNGTT. Binds to host KDR, and to the host integrins ITGAV/ITGB3 and ITGA5/ITGB1. Interacts with host KPNB1/importin beta-1 without previous binding to KPNA1/importin alpha-1. Interacts with EIF2AK2. Interacts with host nucleosome assembly protein NAP1L1; this interaction may be required for the transport of Tat within the nucleus, since the two proteins interact at the nuclear rim. Interacts with host C1QBP/SF2P32; this interaction involves lysine-acetylated Tat. Interacts with the host chemokine receptors CCR2, CCR3 and CXCR4. Interacts with host DPP4/CD26; this interaction may trigger an anti-proliferative effect. Interacts with host LDLR. Interacts with the host extracellular matrix metalloproteinase MMP1. Interacts with host PRMT6; this interaction mediates Tat's methylation. Interacts with, and is ubiquitinated by MDM2/Hdm2. Interacts with host PSMC3 and HTATIP2. Interacts with STAB1; this interaction may overcome SATB1-mediated repression of IL2 and IL2RA (interleukin) in T cells by binding to the same domain than HDAC1. Interacts (when acetylated) with human CDK13, thereby increasing HIV-1 mRNA splicing and promoting the production of the doubly spliced HIV-1 protein Nef. Interacts with host TBP; this interaction modulates the activity of transcriptional pre-initiation complex. Interacts with host RELA. Interacts with host PLSCR1; this interaction negatively regulates Tat transactivation activity by altering its subcellular distribution. Asymmetrical arginine methylation by host PRMT6 seems to diminish the transactivation capacity of Tat and affects the interaction with host CCNT1. Post-translationally, acetylation by EP300, CREBBP, GCN5L2/GCN5 and PCAF regulates the transactivation activity of Tat. EP300-mediated acetylation of Lys-50 promotes dissociation of Tat from the TAR RNA through the competitive binding to PCAF's bromodomain. In addition, the non-acetylated Tat's N-terminus can also interact with PCAF. PCAF-mediated acetylation of Lys-28 enhances Tat's binding to CCNT1. Lys-50 is deacetylated by SIRT1. In terms of processing, polyubiquitination by host MDM2 does not target Tat to degradation, but activates its transactivation function and fosters interaction with CCNT1 and TAR RNA. Phosphorylated by EIF2AK2 on serine and threonine residues adjacent to the basic region important for TAR RNA binding and function. Phosphorylation of Tat by EIF2AK2 is dependent on the prior activation of EIF2AK2 by dsRNA.

It is found in the host nucleus. Its subcellular location is the host nucleolus. It localises to the host cytoplasm. The protein localises to the secreted. Its function is as follows. Transcriptional activator that increases RNA Pol II processivity, thereby increasing the level of full-length viral transcripts. Recognizes a hairpin structure at the 5'-LTR of the nascent viral mRNAs referred to as the transactivation responsive RNA element (TAR) and recruits the cyclin T1-CDK9 complex (P-TEFb complex) that will in turn hyperphosphorylate the RNA polymerase II to allow efficient elongation. The CDK9 component of P-TEFb and other Tat-activated kinases hyperphosphorylate the C-terminus of RNA Pol II that becomes stabilized and much more processive. Other factors such as HTATSF1/Tat-SF1, SUPT5H/SPT5, and HTATIP2 are also important for Tat's function. Besides its effect on RNA Pol II processivity, Tat induces chromatin remodeling of proviral genes by recruiting the histone acetyltransferases (HATs) CREBBP, EP300 and PCAF to the chromatin. This also contributes to the increase in proviral transcription rate, especially when the provirus integrates in transcriptionally silent region of the host genome. To ensure maximal activation of the LTR, Tat mediates nuclear translocation of NF-kappa-B by interacting with host RELA. Through its interaction with host TBP, Tat may also modulate transcription initiation. Tat can reactivate a latently infected cell by penetrating in it and transactivating its LTR promoter. In the cytoplasm, Tat is thought to act as a translational activator of HIV-1 mRNAs. Functionally, extracellular circulating Tat can be endocytosed by surrounding uninfected cells via the binding to several surface receptors such as CD26, CXCR4, heparan sulfate proteoglycans (HSPG) or LDLR. Neurons are rarely infected, but they internalize Tat via their LDLR. Through its interaction with nuclear HATs, Tat is potentially able to control the acetylation-dependent cellular gene expression. Modulates the expression of many cellular genes involved in cell survival, proliferation or in coding for cytokines or cytokine receptors. Tat plays a role in T-cell and neurons apoptosis. Tat induced neurotoxicity and apoptosis probably contribute to neuroAIDS. Circulating Tat also acts as a chemokine-like and/or growth factor-like molecule that binds to specific receptors on the surface of the cells, affecting many cellular pathways. In the vascular system, Tat binds to ITGAV/ITGB3 and ITGA5/ITGB1 integrins dimers at the surface of endothelial cells and competes with bFGF for heparin-binding sites, leading to an excess of soluble bFGF. This Homo sapiens (Human) protein is Protein Tat.